The chain runs to 327 residues: Phenylalanine--tRNA ligase alpha subunit (327 aa).

E252 serves as a coordination point for Mg(2+).

This sequence belongs to the class-II aminoacyl-tRNA synthetase family. Phe-tRNA synthetase alpha subunit type 1 subfamily. Tetramer of two alpha and two beta subunits. Mg(2+) serves as cofactor.

It localises to the cytoplasm. It carries out the reaction tRNA(Phe) + L-phenylalanine + ATP = L-phenylalanyl-tRNA(Phe) + AMP + diphosphate + H(+). The sequence is that of Phenylalanine--tRNA ligase alpha subunit from Shigella sonnei (strain Ss046).